The following is a 195-amino-acid chain: HTH-type transcriptional regulator BetI (195 aa).

Positions Ser-8–Leu-68 constitute an HTH tetR-type domain. Positions Thr-31–Phe-50 form a DNA-binding region, H-T-H motif.

Its pathway is amine and polyamine biosynthesis; betaine biosynthesis via choline pathway [regulation]. In terms of biological role, repressor involved in the biosynthesis of the osmoprotectant glycine betaine. It represses transcription of the choline transporter BetT and the genes of BetAB involved in the synthesis of glycine betaine. The polypeptide is HTH-type transcriptional regulator BetI (Escherichia coli O127:H6 (strain E2348/69 / EPEC)).